A 310-amino-acid polypeptide reads, in one-letter code: MAAAGARHYTSKDGSQHDLVRGIWKLLRLHTPEGLSTASIGWLALFFYAIQQQLSFESLRYTFLGIFACYQITHGVFCMWNDICDRDFDAQVARTKKRPLPSGMVTYTEAMVAFIIGLALSLGVTYAMLGEDVTLTMGPIWGLSFIYPLCKRAIWAPQAVLGLTMAACVLPPWVALGNDATNAKLPASLFGAIFSWLVYLDLIYASQDRPDDEKAGVKSLAVFLGDKLKACLTVLGALQIAFFAVAAFEASASSFLWVFGIAVWAISVPWSILSLNPRDRNSGGRIFLVNAILGIYLAAVSGTDVWLSSR.

A run of 8 helical transmembrane segments spans residues 30-50 (HTPE…FYAI), 63-83 (FLGI…WNDI), 110-130 (AMVA…AMLG), 154-174 (IWAP…PPWV), 185-205 (LPAS…LIYA), 230-250 (ACLT…AFEA), 255-275 (FLWV…ILSL), and 286-306 (IFLV…TDVW).

Belongs to the UbiA prenyltransferase family. Requires Mg(2+) as cofactor.

It is found in the membrane. It participates in secondary metabolite biosynthesis; terpenoid biosynthesis. In terms of biological role, olyprenyl transferase; part of the gene cluster that mediates the biosynthesis of the meroterpenoids nectripenoids A and B, as well as cochliquninone D and isocochliquninone E. The pathway probably begins with the HR-PKS ntnH that catalyzes two chain-extension steps to form a reduced triketide, which then primes the SAT domain in the NR-PKS ntnG to initiate three more cycles of extension to give a linear hexaketide corresponding to the polyketide part of nectripenoids. The FAD-dependent monooxygenase ntnJ then performs an oxidative decarboxylation at C11 of the ntnH/ntnG product, via an electrophilic aromatic hydroxylation with concomitant ipso-decarboxylation. The membrane-bound polyprenyl transferase ntnF then introduces a farnesyl group before the FAD-dependent monooxygenase ntnK functions as the first epoxidase on terminal C12'-C13' olefin, followed by a second epoxidation on C7'-C8' catalyzed by ntnA. The terpene cyclase/mutase ntnI then initiates the sequential tricyclic ring formation through protonation of the terminal epoxide and catalyzes the regioselective and stereoselective 6/6/6-tricyclic ring formation. The cytochrome P450 monooxygenase ntnM may then hydroxylate C1'. The chain is Polyprenyl transferase ntnF from Nectria sp.